The primary structure comprises 291 residues: Pyridoxal 5'-phosphate synthase subunit PdxS (291 aa).

Residue Asp-23 participates in D-ribose 5-phosphate binding. Residue Lys-80 is the Schiff-base intermediate with D-ribose 5-phosphate of the active site. Gly-152 contributes to the D-ribose 5-phosphate binding site. Arg-164 is a binding site for D-glyceraldehyde 3-phosphate. D-ribose 5-phosphate is bound by residues Gly-213 and 234-235 (GS).

Belongs to the PdxS/SNZ family. In the presence of PdxT, forms a dodecamer of heterodimers.

The catalysed reaction is aldehydo-D-ribose 5-phosphate + D-glyceraldehyde 3-phosphate + L-glutamine = pyridoxal 5'-phosphate + L-glutamate + phosphate + 3 H2O + H(+). It participates in cofactor biosynthesis; pyridoxal 5'-phosphate biosynthesis. Catalyzes the formation of pyridoxal 5'-phosphate from ribose 5-phosphate (RBP), glyceraldehyde 3-phosphate (G3P) and ammonia. The ammonia is provided by the PdxT subunit. Can also use ribulose 5-phosphate and dihydroxyacetone phosphate as substrates, resulting from enzyme-catalyzed isomerization of RBP and G3P, respectively. The chain is Pyridoxal 5'-phosphate synthase subunit PdxS from Streptococcus pneumoniae (strain P1031).